The primary structure comprises 623 residues: Xaa-Pro aminopeptidase 1 (623 aa).

Arg-77 is a binding site for a peptide. Residue Lys-304 is modified to N6-acetyllysine. His-395 contacts a peptide. 3 residues coordinate Mn(2+): Asp-415, Asp-426, and His-489. Residues His-489, His-498, and Glu-523 each coordinate a peptide. The Mn(2+) site is built by Glu-523 and Glu-537.

It belongs to the peptidase M24B family. Homodimer. Mn(2+) serves as cofactor.

It localises to the cytoplasm. It is found in the cytosol. The catalysed reaction is Release of any N-terminal amino acid, including proline, that is linked to proline, even from a dipeptide or tripeptide.. Functionally, metalloaminopeptidase that catalyzes the removal of a penultimate prolyl residue from the N-termini of peptides, such as Arg-Pro-Pro. Contributes to the degradation of bradykinin. The chain is Xaa-Pro aminopeptidase 1 (XPNPEP1) from Bos taurus (Bovine).